The following is a 319-amino-acid chain: Acetyl esterase (319 aa).

The Involved in the stabilization of the negatively charged intermediate by the formation of the oxyanion hole motif lies at 91–93 (HGG). Active-site residues include Ser-165, Asp-262, and His-292.

Belongs to the 'GDXG' lipolytic enzyme family. Homodimer. Interacts with MalT and MelA.

The protein localises to the cytoplasm. Its function is as follows. Displays esterase activity towards short chain fatty esters (acyl chain length of up to 8 carbons). Able to hydrolyze triacetylglycerol (triacetin) and tributyrylglycerol (tributyrin), but not trioleylglycerol (triolein) or cholesterol oleate. Negatively regulates MalT activity by antagonizing maltotriose binding. Inhibits MelA galactosidase activity. The polypeptide is Acetyl esterase (Shigella boydii serotype 18 (strain CDC 3083-94 / BS512)).